A 120-amino-acid chain; its full sequence is Transcription elongation factor 1 homolog (120 aa).

Zn(2+) contacts are provided by cysteine 25, cysteine 28, cysteine 49, and cysteine 52. Residues 84–110 (EDDVVQEEEEEVEEEEEEEEEEDDEDD) are compositionally biased toward acidic residues. Residues 84–120 (EDDVVQEEEEEVEEEEEEEEEEDDEDDHVSVKRKYNF) form a disordered region.

The protein belongs to the ELOF1 family.

The protein localises to the nucleus. Its function is as follows. Transcription elongation factor implicated in the maintenance of proper chromatin structure in actively transcribed regions. In Arabidopsis thaliana (Mouse-ear cress), this protein is Transcription elongation factor 1 homolog.